Consider the following 623-residue polypeptide: Phosphatidylinositol-3-phosphatase SAC1 (623 aa).

Residues 1 to 523 (MTGPIVYVQN…SPFPDRRPVY (523 aa)) lie on the Cytoplasmic side of the membrane. Residues 115 to 454 (LELHLKNSTF…ADAVSVAYSG (340 aa)) form the SAC domain. Residues lysine 246 and lysine 358 each participate in a glycyl lysine isopeptide (Lys-Gly) (interchain with G-Cter in ubiquitin) cross-link. Residues 524-544 (IQLIPMIICAALTVLGATIFF) traverse the membrane as a helical segment. The Lumenal portion of the chain corresponds to 545-552 (PKDRFTSS). Residues 553 to 573 (KNLLYFAGASIVLALSTKFMF) traverse the membrane as a helical segment. At 574–623 (KNGIQFVNWPKLVDVGFLVVHQTHDKEQQFKGLKYAQSPKFSKPDPLKRD) the chain is on the cytoplasmic side.

In terms of assembly, component of the SPOTS complex, at least composed of LCB1/2 (LCB1 and/or LCB2), ORM1/2 (ORM1 and/or ORM2), SAC1 and TSC3.

It is found in the endoplasmic reticulum membrane. The protein localises to the golgi apparatus membrane. The enzyme catalyses a 1,2-diacyl-sn-glycero-3-phospho-(1D-myo-inositol-3-phosphate) + H2O = a 1,2-diacyl-sn-glycero-3-phospho-(1D-myo-inositol) + phosphate. It catalyses the reaction a 1,2-diacyl-sn-glycero-3-phospho-(1D-myo-inositol 4-phosphate) + H2O = a 1,2-diacyl-sn-glycero-3-phospho-(1D-myo-inositol) + phosphate. In terms of biological role, phosphoinositide phosphatase which catalyzes the hydrolysis of phosphatidylinositol 3-phosphate (PtdIns(3)P) and phosphatidylinositol 4-phosphate (PtdIns(4)P). Has low activity towards phosphatidylinositol-3,5-bisphosphate (PtdIns(3,5)P2). May be involved in the coordination of the activities of the secretory pathway and the actin cytoskeleton. This Saccharomyces cerevisiae (strain ATCC 204508 / S288c) (Baker's yeast) protein is Phosphatidylinositol-3-phosphatase SAC1 (SAC1).